The primary structure comprises 93 residues: Pyrimidine/purine nucleoside phosphorylase (93 aa).

It belongs to the nucleoside phosphorylase PpnP family.

It carries out the reaction a purine D-ribonucleoside + phosphate = a purine nucleobase + alpha-D-ribose 1-phosphate. The enzyme catalyses adenosine + phosphate = alpha-D-ribose 1-phosphate + adenine. It catalyses the reaction cytidine + phosphate = cytosine + alpha-D-ribose 1-phosphate. The catalysed reaction is guanosine + phosphate = alpha-D-ribose 1-phosphate + guanine. It carries out the reaction inosine + phosphate = alpha-D-ribose 1-phosphate + hypoxanthine. The enzyme catalyses thymidine + phosphate = 2-deoxy-alpha-D-ribose 1-phosphate + thymine. It catalyses the reaction uridine + phosphate = alpha-D-ribose 1-phosphate + uracil. The catalysed reaction is xanthosine + phosphate = alpha-D-ribose 1-phosphate + xanthine. Functionally, catalyzes the phosphorolysis of diverse nucleosides, yielding D-ribose 1-phosphate and the respective free bases. Can use uridine, adenosine, guanosine, cytidine, thymidine, inosine and xanthosine as substrates. Also catalyzes the reverse reactions. The polypeptide is Pyrimidine/purine nucleoside phosphorylase (Pseudomonas syringae pv. syringae (strain B728a)).